The sequence spans 468 residues: Glutamine synthetase (468 aa).

Residues 14–98 form the GS beta-grasp domain; the sequence is HDVKYVDLRF…ILCDVYEPST (85 aa). The 363-residue stretch at 106–468 folds into the GS catalytic domain; the sequence is PRGIAKAAEK…PIEYKMYYSV (363 aa). 2 residues coordinate Mg(2+): E131 and E133. E209 lines the ATP pocket. Mg(2+) contacts are provided by E214 and E221. L-glutamate-binding positions include 265–266 and G266; that span reads NG. H270 contacts Mg(2+). ATP contacts are provided by residues 272–274 and S274; that span reads HQS. Positions 322, 328, and 340 each coordinate L-glutamate. ATP is bound by residues R340, R345, and K353. E358 contacts Mg(2+). Residue R360 participates in L-glutamate binding. Y398 is modified (O-AMP-tyrosine).

The protein belongs to the glutamine synthetase family. As to quaternary structure, oligomer of 12 subunits arranged in the form of two hexameric ring. Mg(2+) is required as a cofactor.

The protein localises to the cytoplasm. The catalysed reaction is L-glutamate + NH4(+) + ATP = L-glutamine + ADP + phosphate + H(+). With respect to regulation, the activity of this enzyme could be controlled by adenylation under conditions of abundant glutamine. Its function is as follows. Catalyzes the ATP-dependent biosynthesis of glutamine from glutamate and ammonia. The protein is Glutamine synthetase of Azospirillum brasilense.